The following is a 195-amino-acid chain: Fe/S biogenesis protein NfuA (195 aa).

Residues C152 and C155 each contribute to the [4Fe-4S] cluster site.

This sequence belongs to the NfuA family. Homodimer. It depends on [4Fe-4S] cluster as a cofactor.

Involved in iron-sulfur cluster biogenesis. Binds a 4Fe-4S cluster, can transfer this cluster to apoproteins, and thereby intervenes in the maturation of Fe/S proteins. Could also act as a scaffold/chaperone for damaged Fe/S proteins. This Vibrio cholerae serotype O1 (strain ATCC 39315 / El Tor Inaba N16961) protein is Fe/S biogenesis protein NfuA.